We begin with the raw amino-acid sequence, 284 residues long: Urease accessory protein UreD (284 aa).

It belongs to the UreD family. As to quaternary structure, ureD, UreF and UreG form a complex that acts as a GTP-hydrolysis-dependent molecular chaperone, activating the urease apoprotein by helping to assemble the nickel containing metallocenter of UreC. The UreE protein probably delivers the nickel.

The protein resides in the cytoplasm. Required for maturation of urease via the functional incorporation of the urease nickel metallocenter. In Bordetella bronchiseptica (strain ATCC BAA-588 / NCTC 13252 / RB50) (Alcaligenes bronchisepticus), this protein is Urease accessory protein UreD.